Here is a 254-residue protein sequence, read N- to C-terminus: Thiazole synthase (254 aa).

Lys95 acts as the Schiff-base intermediate with DXP in catalysis. 1-deoxy-D-xylulose 5-phosphate-binding positions include Gly156, 182 to 183 (AG), and 204 to 205 (NT).

The protein belongs to the ThiG family. In terms of assembly, homotetramer. Forms heterodimers with either ThiH or ThiS.

The protein resides in the cytoplasm. It carries out the reaction [ThiS sulfur-carrier protein]-C-terminal-Gly-aminoethanethioate + 2-iminoacetate + 1-deoxy-D-xylulose 5-phosphate = [ThiS sulfur-carrier protein]-C-terminal Gly-Gly + 2-[(2R,5Z)-2-carboxy-4-methylthiazol-5(2H)-ylidene]ethyl phosphate + 2 H2O + H(+). The protein operates within cofactor biosynthesis; thiamine diphosphate biosynthesis. In terms of biological role, catalyzes the rearrangement of 1-deoxy-D-xylulose 5-phosphate (DXP) to produce the thiazole phosphate moiety of thiamine. Sulfur is provided by the thiocarboxylate moiety of the carrier protein ThiS. In vitro, sulfur can be provided by H(2)S. The sequence is that of Thiazole synthase from Shewanella piezotolerans (strain WP3 / JCM 13877).